Reading from the N-terminus, the 581-residue chain is DNA polymerase alpha subunit B (581 aa).

This sequence belongs to the DNA polymerase alpha subunit B family. As to quaternary structure, DNA polymerase alpha:primase is a four subunit enzyme complex, which is assembled throughout the cell cycle, and consists of the two DNA polymerase subunits A and B, and the DNA primase large and small subunits. Subunit B binds to subunit A.

It localises to the nucleus. May play an essential role at the early stage of chromosomal DNA replication by coupling the polymerase alpha/primase complex to the cellular replication machinery. Required for the distribution of pie-1 in cell divsion. The chain is DNA polymerase alpha subunit B (div-1) from Caenorhabditis elegans.